A 323-amino-acid chain; its full sequence is Leucine-rich repeat-containing protein 46 (323 aa).

4 LRR repeats span residues 49–70 (DLETVRLDGEGITCIGNLERLR), 71–92 (NIHSLYLQSNKIQRIENLACIT), 93–114 (SLRFLSLAGNQIRHVENLLDLQ), and 115–135 (YLQFLDLSENLIETLKLDELP). The region spanning 146–188 (NPCTNQDGYRKMVIGALPLLLDLDKQPILERWTSDEEDKSSDE) is the LRRCT domain. At T178 the chain carries Phosphothreonine. S179, S185, and S186 each carry phosphoserine. Residues 203–228 (RGFFKDLEQELHQHQERRQQAALTEH) are a coiled coil. Residues 252–323 (DCSPAVTEEP…TKSTNKRGTK (72 aa)) form a disordered region. A compositionally biased stretch (polar residues) spans 269-290 (ATSSTQMASSSKKQVPRNQKGS). Residues 297 to 310 (ALAATASKTSLAAA) are compositionally biased toward low complexity. S303 carries the post-translational modification Phosphoserine.

The protein resides in the cell projection. The protein localises to the cilium. It localises to the flagellum. Required for normal spermatogenesis and male fertility. Plays an important role in sperm flagellum biogenesis. In Rattus norvegicus (Rat), this protein is Leucine-rich repeat-containing protein 46 (Lrrc46).